The following is a 556-amino-acid chain: Potassium-transporting ATPase potassium-binding subunit (556 aa).

The next 12 helical transmembrane spans lie at 3–23 (AHGV…TPIL), 57–77 (AAYA…LYAL), 129–149 (GLTV…VALM), 172–192 (LGLL…QGVP), 247–267 (LVNL…TNTF), 278–298 (WALL…AWWA), 319–339 (LGVA…CGAV), 346–366 (LLPL…VVVG), 371–391 (GLYG…LMVG), 408–428 (LAVI…GLAI), 486–506 (FVVM…MAVP), and 516–536 (GWLF…LTYF).

This sequence belongs to the KdpA family. As to quaternary structure, the system is composed of three essential subunits: KdpA, KdpB and KdpC.

It is found in the cell inner membrane. Its function is as follows. Part of the high-affinity ATP-driven potassium transport (or Kdp) system, which catalyzes the hydrolysis of ATP coupled with the electrogenic transport of potassium into the cytoplasm. This subunit binds the periplasmic potassium ions and delivers the ions to the membrane domain of KdpB through an intramembrane tunnel. The sequence is that of Potassium-transporting ATPase potassium-binding subunit from Paramagnetospirillum magneticum (strain ATCC 700264 / AMB-1) (Magnetospirillum magneticum).